The chain runs to 161 residues: Prs ADP-ribosylating toxin (161 aa).

Belongs to the MbcT/ParT/Res family. In terms of assembly, homodimer, forms heterotetrameric ParS(2)-ParT(2) complexes. In terms of processing, consumes NAD(+) and auto-ADP-ribosylates on the tryptic fragment Ala-47-Arg-66 in vitro. Also auto-ADP-ribosylates using NADP(+).

Toxic component of a type II toxin-antitoxin (TA) system. Expression in E.coli inhibits cell growth; bacteriostasis is neutralized by expression of cognate antitoxin ParS. ADP-ribosylates E.coli ribose-phosphate pyrophosphokinase (RPPK, prs) using NAD(+) in vitro; ADP-ribosylates RPPK on 'Lys-182' and 'Ser-202'. Cannot use NADP(+). Also auto-ADP-ribosylates in vitro; in the presence of RPPK auto-ADP-ribosylation decreases. This is Prs ADP-ribosylating toxin from Sphingobium sp. (strain YBL2).